Here is a 360-residue protein sequence, read N- to C-terminus: GTP 3',8-cyclase (360 aa).

The 219-residue stretch at 33–251 (RFGRSATDLR…LQPHFRLRPD (219 aa)) folds into the Radical SAM core domain. Arg-42 is a GTP binding site. Positions 49 and 53 each coordinate [4Fe-4S] cluster. Residue Tyr-55 coordinates S-adenosyl-L-methionine. [4Fe-4S] cluster is bound at residue Cys-56. Residue Arg-93 participates in GTP binding. Residue Gly-97 coordinates S-adenosyl-L-methionine. Thr-124 contacts GTP. Position 148 (Ser-148) interacts with S-adenosyl-L-methionine. Lys-185 contributes to the GTP binding site. An S-adenosyl-L-methionine-binding site is contributed by Met-219. Positions 287 and 290 each coordinate [4Fe-4S] cluster. 292–294 (RTR) contacts GTP. Cys-304 serves as a coordination point for [4Fe-4S] cluster.

It belongs to the radical SAM superfamily. MoaA family. In terms of assembly, monomer and homodimer. [4Fe-4S] cluster serves as cofactor.

It carries out the reaction GTP + AH2 + S-adenosyl-L-methionine = (8S)-3',8-cyclo-7,8-dihydroguanosine 5'-triphosphate + 5'-deoxyadenosine + L-methionine + A + H(+). It participates in cofactor biosynthesis; molybdopterin biosynthesis. Functionally, catalyzes the cyclization of GTP to (8S)-3',8-cyclo-7,8-dihydroguanosine 5'-triphosphate. The protein is GTP 3',8-cyclase of Mycobacterium marinum (strain ATCC BAA-535 / M).